The primary structure comprises 449 residues: Xylose isomerase (449 aa).

Residues His103 and Asp106 contribute to the active site. The Mg(2+) site is built by Glu234, Glu270, His273, Asp298, Asp309, Asp311, and Asp342.

It belongs to the xylose isomerase family. As to quaternary structure, homotetramer. It depends on Mg(2+) as a cofactor.

It localises to the cytoplasm. It catalyses the reaction alpha-D-xylose = alpha-D-xylulofuranose. In Levilactobacillus brevis (Lactobacillus brevis), this protein is Xylose isomerase.